A 196-amino-acid chain; its full sequence is GTP cyclohydrolase 1 (196 aa).

Cys-84, His-87, and Cys-157 together coordinate Zn(2+).

It belongs to the GTP cyclohydrolase I family. Toroid-shaped homodecamer, composed of two pentamers of five dimers.

The enzyme catalyses GTP + H2O = 7,8-dihydroneopterin 3'-triphosphate + formate + H(+). Its pathway is cofactor biosynthesis; 7,8-dihydroneopterin triphosphate biosynthesis; 7,8-dihydroneopterin triphosphate from GTP: step 1/1. This Corynebacterium glutamicum (strain ATCC 13032 / DSM 20300 / JCM 1318 / BCRC 11384 / CCUG 27702 / LMG 3730 / NBRC 12168 / NCIMB 10025 / NRRL B-2784 / 534) protein is GTP cyclohydrolase 1.